We begin with the raw amino-acid sequence, 367 residues long: Tetraacyldisaccharide 4'-kinase (367 aa).

ATP is bound at residue 68–75 (VLGGSGKT).

It belongs to the LpxK family.

It carries out the reaction a lipid A disaccharide + ATP = a lipid IVA + ADP + H(+). It functions in the pathway glycolipid biosynthesis; lipid IV(A) biosynthesis; lipid IV(A) from (3R)-3-hydroxytetradecanoyl-[acyl-carrier-protein] and UDP-N-acetyl-alpha-D-glucosamine: step 6/6. Its function is as follows. Transfers the gamma-phosphate of ATP to the 4'-position of a tetraacyldisaccharide 1-phosphate intermediate (termed DS-1-P) to form tetraacyldisaccharide 1,4'-bis-phosphate (lipid IVA). This chain is Tetraacyldisaccharide 4'-kinase, found in Chlamydia abortus (strain DSM 27085 / S26/3) (Chlamydophila abortus).